The chain runs to 424 residues: Probable ribonuclease FAU-1 (424 aa).

The protein belongs to the FAU-1 family.

In terms of biological role, probable RNase involved in rRNA stability through maturation and/or degradation of precursor rRNAs. Binds to RNA in loop regions with AU-rich sequences. In Saccharolobus solfataricus (strain ATCC 35092 / DSM 1617 / JCM 11322 / P2) (Sulfolobus solfataricus), this protein is Probable ribonuclease FAU-1.